We begin with the raw amino-acid sequence, 413 residues long: Oxidoreductase vrtI (413 aa).

Positions 235-341 (DAESLTTLSM…RYSIAYFLRA (107 aa)) constitute a Fe2OG dioxygenase domain. Positions 262, 264, and 319 each coordinate Fe cation. A 2-oxoglutarate-binding site is contributed by arginine 332.

The protein belongs to the iron/ascorbate-dependent oxidoreductase family.

It participates in secondary metabolite biosynthesis; terpenoid biosynthesis. In terms of biological role, oxidoreductase; part of the gene cluster that mediates the biosynthesis of viridicatumtoxin, a tetracycline-like fungal meroterpenoid with a unique, fused spirobicyclic ring system. The first step of the pathway is the production of the malonamoyl-CoA starter unit for the polyketide synthase vrtA. The aldolase vrtJ may be involved in the synthesis of the malonamate substrate for malonamoyl-CoA synthetase vrtB. The polyketide synthase vrtA then may utilize the malonamoyl-CoA starter unit, followed by sequential condensation of eight malonyl-CoA units to form the polyketide backbone. The cyclization of the last ring could be mediated by the lactamase-like protein vrtG. The proposed post-PKS tailoring steps are a hydroxylation at C5 catalyzed the cytochrome P450 monooxygenase vrtE, a hydroxylation at C12a catalyzed by VrtH and/or VrtI, and an O-methylation by the O-methyltransferase vrtF. VrtC is then proposed to catalyze the transfer of a geranyl group synthesized by vrtD to the aromatic C ring of the tetracyclic polyketide intermediate of viridicatumtoxin to yield previridicatumtoxin. Finally, the cytochrome P450 monooxygenase vrtK catalyzes the spirocyclization of the geranyl moiety of previridicatumtoxin to afford viridicatumtoxin. This chain is Oxidoreductase vrtI, found in Penicillium aethiopicum.